The following is a 41-amino-acid chain: MENFQKYLSTAPVLLTIWLTFTAGFIIEINRFFPDLLGLYF.

Residues 7–27 traverse the membrane as a helical segment; that stretch reads YLSTAPVLLTIWLTFTAGFII.

It belongs to the PsaJ family.

It localises to the plastid. The protein resides in the chloroplast thylakoid membrane. Its function is as follows. May help in the organization of the PsaE and PsaF subunits. This Phaeodactylum tricornutum (strain CCAP 1055/1) protein is Photosystem I reaction center subunit IX.